We begin with the raw amino-acid sequence, 151 residues long: Deazaflavin-dependent nitroreductase (151 aa).

Coenzyme F420-(gamma-Glu)n-binding positions include 54-56 (RKT), 60-65 (RVNPLY), 76-79 (AASK), 87-91 (MWYLN), and Tyr133.

Belongs to the F420H(2)-dependent quinone reductase family.

The protein localises to the cell membrane. It catalyses the reaction oxidized coenzyme F420-(gamma-L-Glu)(n) + a quinol + H(+) = reduced coenzyme F420-(gamma-L-Glu)(n) + a quinone. Involved in a F420-dependent anti-oxidant mechanism that protects M.tuberculosis against oxidative stress and bactericidal agents. Catalyzes the F420H(2)-dependent two-electron reduction of quinones to dihydroquinones, thereby preventing the formation of cytotoxic semiquinones obtained by the one-electron reduction pathway. In vitro, catalyzes the reduction of both benzoquinone and naphthoquinone analogs; since menaquinone is the sole quinone electron carrier in the respiratory chain in M.tuberculosis, the physiological electron acceptor for Fqr-mediated F420H(2) oxidation is therefore likely to be the endogenous menaquinone found in the membrane fraction of M.tuberculosis. Is able to use F420 species with two and five glutamate residues in its polyglutamate tail. Cannot use NADH or NADPH instead of F420H(2) as the electron donor. Its function is as follows. Is involved in the bioreductive activation of bicyclic 4-nitroimidazole prodrugs such as PA-824 and delamanid developed for anti-tuberculosis therapy against both replicating and persistent bacteria. It converts PA-824 into three primary metabolites resulting from reduction of the imidazole ring at C-3; the major one is the corresponding des-nitroimidazole that generates lethal reactive nitrogen species, including nitric oxide (NO), which appears to be responsible for the anaerobic killing activity. Ddn uses the reduced F420 produced by FGD1 to activate PA-824. Delamanid (OPC-67683) is also reduced by Ddn to its des-nitro form. The polypeptide is Deazaflavin-dependent nitroreductase (ddn) (Mycobacterium tuberculosis (strain CDC 1551 / Oshkosh)).